We begin with the raw amino-acid sequence, 35 residues long: Photosystem II reaction center protein T (35 aa).

Residues 3-23 (ALVYTFLLVSTLGIIFFAIFF) traverse the membrane as a helical segment.

The protein belongs to the PsbT family. PSII is composed of 1 copy each of membrane proteins PsbA, PsbB, PsbC, PsbD, PsbE, PsbF, PsbH, PsbI, PsbJ, PsbK, PsbL, PsbM, PsbT, PsbY, PsbZ, Psb30/Ycf12, at least 3 peripheral proteins of the oxygen-evolving complex and a large number of cofactors. It forms dimeric complexes.

It localises to the plastid. The protein resides in the chloroplast thylakoid membrane. Its function is as follows. Found at the monomer-monomer interface of the photosystem II (PS II) dimer, plays a role in assembly and dimerization of PSII. PSII is a light-driven water plastoquinone oxidoreductase, using light energy to abstract electrons from H(2)O, generating a proton gradient subsequently used for ATP formation. The protein is Photosystem II reaction center protein T of Amborella trichopoda.